Consider the following 320-residue polypeptide: MQTKNKQGVLLVNLGTPDEPTAPAVKRFLSQFLHDHRVVDMTRWLWCPILHGVILPIRSPKVAKLYESVWMEEGSPLMVYSKRQAKKLAQHLDMPVELGMTYGNPSLQSGFEALIAQGVEEVIVLPLYPQYSGTTTAAVSDGITKAFKQLPVMPAFSFIRDYHDHPMYIEALAHSVRQYWEEHGKGDYLLCSYHGIPKRYADNGDIYPQHCEATTRLLGEALGLSSDQIGMAYQSRFGREEWLQPYTDKTLETITSKGVKKIDIMTPAFSSDCLETLEEIAGENKEIFMEAGGEQFHYIPCLNDDDMHIDMMAELVRSKL.

Histidine 194 and glutamate 275 together coordinate Fe cation.

It belongs to the ferrochelatase family.

The protein resides in the cytoplasm. It carries out the reaction heme b + 2 H(+) = protoporphyrin IX + Fe(2+). The protein operates within porphyrin-containing compound metabolism; protoheme biosynthesis; protoheme from protoporphyrin-IX: step 1/1. In terms of biological role, catalyzes the ferrous insertion into protoporphyrin IX. The polypeptide is Ferrochelatase (Vibrio parahaemolyticus serotype O3:K6 (strain RIMD 2210633)).